We begin with the raw amino-acid sequence, 126 residues long: Small ribosomal subunit protein uS13 (126 aa).

The disordered stretch occupies residues 92-126 (HRRGLPANGQRTHTNARTRKGPRKGMLQRRPAATK). The segment covering 105-118 (TNARTRKGPRKGML) has biased composition (basic residues).

This sequence belongs to the universal ribosomal protein uS13 family. Part of the 30S ribosomal subunit. Forms a loose heterodimer with protein S19. Forms two bridges to the 50S subunit in the 70S ribosome.

Functionally, located at the top of the head of the 30S subunit, it contacts several helices of the 16S rRNA. In the 70S ribosome it contacts the 23S rRNA (bridge B1a) and protein L5 of the 50S subunit (bridge B1b), connecting the 2 subunits; these bridges are implicated in subunit movement. Contacts the tRNAs in the A and P-sites. This is Small ribosomal subunit protein uS13 from Sorangium cellulosum (strain So ce56) (Polyangium cellulosum (strain So ce56)).